A 98-amino-acid polypeptide reads, in one-letter code: NADH-ubiquinone oxidoreductase chain 4L (98 aa).

3 helical membrane-spanning segments follow: residues 1–21 (MLSI…GVLI), 29–49 (TLLC…LLIT), and 59–79 (TPLI…ALLV).

The protein belongs to the complex I subunit 4L family. As to quaternary structure, core subunit of respiratory chain NADH dehydrogenase (Complex I) which is composed of 45 different subunits.

The protein resides in the mitochondrion inner membrane. The enzyme catalyses a ubiquinone + NADH + 5 H(+)(in) = a ubiquinol + NAD(+) + 4 H(+)(out). Functionally, core subunit of the mitochondrial membrane respiratory chain NADH dehydrogenase (Complex I) which catalyzes electron transfer from NADH through the respiratory chain, using ubiquinone as an electron acceptor. Part of the enzyme membrane arm which is embedded in the lipid bilayer and involved in proton translocation. The protein is NADH-ubiquinone oxidoreductase chain 4L (MT-ND4L) of Sminthopsis crassicaudata (Fat-tailed dunnart).